The chain runs to 1111 residues: MATTEPSVEQLETKTAKLKLENTTKRDTLIELEKKYQQKWQEEKAFEVDAPLEDVPIDELRKKYPKFFGNMPYPYMNGALHLGHAFTLSKVEFTTAFERLNGKRVLFPMGFHCTGMPICASADRLSREIEMFGPSFDVPEEKEEEVEVEVKTPNAREDVTKHSGKKSKAAAKTAAVKYQFQIMESLGVPRTEIHKFADAKYWLSYFPPLCQRDCTEFGLGIDWRRSFITTDVNPYYDSFVRWQVNHLHDSGKIKFGERYTVYSIKDGQPCMDHDRKSGEGVGPQEYTGIKMEVLEFPEAARKALQSIDLSNKKVCMIAATLRPETMYGQTNCYVGPNITYGIYESNVPNELFICTRRAANNMAYQKLSKERGVVSELGTIKGQDLIGALVNAPLSVHKQVYVLPMETVLATKGTGVVTSVPSDSPDDFATLTELRKKAEFYHLNPEWMKYEAVPIIRTPSYGDMCAEFLCKKLKIQSPKDVKQLAQAKELAYKECFYQGTMIIGKYSGEKVETAKPKVRKELIDQGLAFVYNEPEGQVISRSGDDCIVALCDQWFLDYGEASWKAVTEKALDRLNTFSPEVRNGFLKTLDWLSQWACARSYGLGTRLPWDPQFLVESLTDSTIYMAYYTICHLLHSDVYGKVPGALNIKPEQMTPEVWDHVFRQAPKPKNTSISDEALARLCREFQYFYPFDIRASGKDLVPNHLTFCLYTHTAIFDEKYWPKGIRANGHLLMNGEKMSKSTGNFMTLHEATKKFGADATRLALADAGDTVDDANFEEALANSAILRLYTQEAWCKEMMENLDNLRTGPYNFHDKVFENEINQLIESSREAFSATLFKAALKSCFYDLQNARDWYREVTADRKMHRDLVCRWIETQVLLLATFAPHWSEHIWLTTLKKPQSIHVSGRFPQVSSPVNTALSNSLLYIRTLSRVIREAEAAQLKRQKKGKGMLFDPSKPKRLTVFVAEKFPEWQAQYVALLQKYYNESENKFDDKAIISSVDKKEMKRAMPFIQQFKQSVINRGEHVSANSIFSRELGFNELEVLREVKPYLVRNVGIQELRIVLLQKPADKSSAAIGLVESGSDAGATVEIAPNFANTVPGQPTFLFENVSA.

Positions 74–84 (PYMNGALHLGH) match the 'HIGH' region motif. Ser460 carries the post-translational modification Phosphoserine. Residues 737-741 (KMSKS) carry the 'KMSKS' region motif. Position 740 (Lys740) interacts with ATP.

The protein belongs to the class-I aminoacyl-tRNA synthetase family.

Its subcellular location is the cytoplasm. It catalyses the reaction tRNA(Leu) + L-leucine + ATP = L-leucyl-tRNA(Leu) + AMP + diphosphate. The protein is Putative leucine--tRNA ligase, cytoplasmic (lrs1) of Schizosaccharomyces pombe (strain 972 / ATCC 24843) (Fission yeast).